Reading from the N-terminus, the 318-residue chain is uncharacterized protein (318 aa).

To E.coli YfaT and P.aeruginosa PA4490.

This is an uncharacterized protein from Thermotoga maritima (strain ATCC 43589 / DSM 3109 / JCM 10099 / NBRC 100826 / MSB8).